The sequence spans 363 residues: Cyanuric acid amidohydrolase (363 aa).

An RU A region spans residues 1–104; the sequence is MYHIDVFRIP…TVFARRPAID (104 aa). Substrate contacts are provided by residues arginine 52 and 83–84; that span reads SG. The interval 112–249 is RU B; it reads RLTLGIAFTR…NVVIAIGMSE (138 aa). Residue lysine 162 is part of the active site. Substrate contacts are provided by residues arginine 194 and 232-233; that span reads SA. The active-site Nucleophile is the serine 232. The segment at 255–363 is RU C; the sequence is LVIAHGVMSD…GGPFAVIARA (109 aa). Glutamate 297 contributes to the Mg(2+) binding site. Residues arginine 324 and 343–344 contribute to the substrate site; that span reads SG. Residues alanine 346, glutamine 349, glycine 350, proline 351, and glycine 354 each contribute to the Mg(2+) site.

It belongs to the cyclic amide hydrolase (CyAH) family. As to quaternary structure, homotetramer.

The catalysed reaction is cyanurate + H2O = 1-carboxybiuret + H(+). It functions in the pathway xenobiotic degradation; atrazine degradation; biuret from cyanurate: step 1/1. Inhibited by barbituric acid. In terms of biological role, responsible for the hydrolysis of cyanuric acid, an intermediate formed during catabolism of s-triazine based compounds in herbicides such as atrazine and polymers such as melamine. Catalyzes the hydrolytic opening of the s-triazine ring of cyanuric acid (2,4,6-trihydroxy-s-triazine) to yield carbon dioxide and carboxybiuret, which spontaneously decarboxylates to biuret. In Pseudomonas sp. (strain ADP), this protein is Cyanuric acid amidohydrolase (atzD).